We begin with the raw amino-acid sequence, 148 residues long: Large ribosomal subunit protein bL9 (148 aa).

It belongs to the bacterial ribosomal protein bL9 family.

Functionally, binds to the 23S rRNA. This Pseudomonas putida (strain ATCC 700007 / DSM 6899 / JCM 31910 / BCRC 17059 / LMG 24140 / F1) protein is Large ribosomal subunit protein bL9.